We begin with the raw amino-acid sequence, 369 residues long: Ferrochelatase (369 aa).

His-210 and Glu-291 together coordinate Fe cation.

It belongs to the ferrochelatase family.

The protein localises to the cytoplasm. It carries out the reaction heme b + 2 H(+) = protoporphyrin IX + Fe(2+). It functions in the pathway porphyrin-containing compound metabolism; protoheme biosynthesis; protoheme from protoporphyrin-IX: step 1/1. Functionally, catalyzes the ferrous insertion into protoporphyrin IX. The chain is Ferrochelatase from Thioalkalivibrio sulfidiphilus (strain HL-EbGR7).